The sequence spans 402 residues: Dihydrolipoyllysine-residue acetyltransferase component of pyruvate dehydrogenase complex (402 aa).

Residues 2 to 77 (ANEFKFTDVG…HIGQVMAVID (76 aa)) enclose the Lipoyl-binding domain. Position 43 is an N6-lipoyllysine (K43). 2 disordered regions span residues 82 to 110 (AAAP…APVT) and 143 to 172 (PQPT…PSGE). 2 stretches are compositionally biased toward pro residues: residues 87-107 (APQP…PTPA) and 143-162 (PQPT…PTPA). The active site involves H374.

This sequence belongs to the 2-oxoacid dehydrogenase family. Forms a 24-polypeptide structural core with octahedral symmetry. The cofactor is (R)-lipoate.

It catalyses the reaction N(6)-[(R)-dihydrolipoyl]-L-lysyl-[protein] + acetyl-CoA = N(6)-[(R)-S(8)-acetyldihydrolipoyl]-L-lysyl-[protein] + CoA. In terms of biological role, the pyruvate dehydrogenase complex catalyzes the overall conversion of pyruvate to acetyl-CoA and CO(2). It contains multiple copies of three enzymatic components: pyruvate dehydrogenase (E1), dihydrolipoamide acetyltransferase (E2) and lipoamide dehydrogenase (E3). The sequence is that of Dihydrolipoyllysine-residue acetyltransferase component of pyruvate dehydrogenase complex (pdhC) from Mycoplasma pneumoniae (strain ATCC 29342 / M129 / Subtype 1) (Mycoplasmoides pneumoniae).